The primary structure comprises 137 residues: Small ribosomal subunit protein uS12 (137 aa).

Disordered regions lie at residues 1-21 (MPTINQLVRKPRKSKVEKSDS) and 36-57 (TKLSAPQKRGVATRVGTMTPKK). 3-methylthioaspartic acid is present on Asp-102.

It belongs to the universal ribosomal protein uS12 family. Part of the 30S ribosomal subunit. Contacts proteins S8 and S17. May interact with IF1 in the 30S initiation complex.

Its function is as follows. With S4 and S5 plays an important role in translational accuracy. Interacts with and stabilizes bases of the 16S rRNA that are involved in tRNA selection in the A site and with the mRNA backbone. Located at the interface of the 30S and 50S subunits, it traverses the body of the 30S subunit contacting proteins on the other side and probably holding the rRNA structure together. The combined cluster of proteins S8, S12 and S17 appears to hold together the shoulder and platform of the 30S subunit. The sequence is that of Small ribosomal subunit protein uS12 from Streptococcus agalactiae serotype Ia (strain ATCC 27591 / A909 / CDC SS700).